Reading from the N-terminus, the 278-residue chain is MSRVNFDQLLEAGVHFGHLKRKWNPAMAPYIFMERNGIHIIDLYKTVAKVDEAAEVMKNLAKQGKKVLFVATKKQAKQVVADKAASVGMPYVIERWPGGMLTNFPTIRKAIKKMATIDKMTKDGTFDNLSKREKLQITRQRAKLEKTLGSIVDLTRLPSALFVVDVMKEHIAVREANRLGIPVFGMVDTNSNPNNIDYVIPANDDATKSVEVILGAICEAMNEGLQERKAEKIDAEAAEEAPKRERKAKAAVKKERTKKEDDDALNANVAGKFAKDEE.

A disordered region spans residues 235–278; the sequence is AEAAEEAPKRERKAKAAVKKERTKKEDDDALNANVAGKFAKDEE. The segment covering 252-261 has biased composition (basic and acidic residues); that stretch reads VKKERTKKED.

Belongs to the universal ribosomal protein uS2 family.

The sequence is that of Small ribosomal subunit protein uS2 from Parabacteroides distasonis (strain ATCC 8503 / DSM 20701 / CIP 104284 / JCM 5825 / NCTC 11152).